Reading from the N-terminus, the 239-residue chain is Pyridoxine 5'-phosphate synthase (239 aa).

Residue asparagine 7 participates in 3-amino-2-oxopropyl phosphate binding. 9–10 (DH) serves as a coordination point for 1-deoxy-D-xylulose 5-phosphate. Residue arginine 18 participates in 3-amino-2-oxopropyl phosphate binding. Catalysis depends on histidine 43, which acts as the Proton acceptor. 2 residues coordinate 1-deoxy-D-xylulose 5-phosphate: arginine 45 and histidine 50. Glutamate 70 acts as the Proton acceptor in catalysis. Position 100 (threonine 100) interacts with 1-deoxy-D-xylulose 5-phosphate. Histidine 191 acts as the Proton donor in catalysis. 3-amino-2-oxopropyl phosphate is bound by residues glycine 192 and 213–214 (GH).

The protein belongs to the PNP synthase family. As to quaternary structure, homooctamer; tetramer of dimers.

The protein localises to the cytoplasm. The catalysed reaction is 3-amino-2-oxopropyl phosphate + 1-deoxy-D-xylulose 5-phosphate = pyridoxine 5'-phosphate + phosphate + 2 H2O + H(+). It participates in cofactor biosynthesis; pyridoxine 5'-phosphate biosynthesis; pyridoxine 5'-phosphate from D-erythrose 4-phosphate: step 5/5. Functionally, catalyzes the complicated ring closure reaction between the two acyclic compounds 1-deoxy-D-xylulose-5-phosphate (DXP) and 3-amino-2-oxopropyl phosphate (1-amino-acetone-3-phosphate or AAP) to form pyridoxine 5'-phosphate (PNP) and inorganic phosphate. This is Pyridoxine 5'-phosphate synthase from Synechococcus sp. (strain JA-2-3B'a(2-13)) (Cyanobacteria bacterium Yellowstone B-Prime).